The sequence spans 117 residues: NADH dehydrogenase [ubiquinone] 1 beta subcomplex subunit 9 (117 aa).

S2 bears the N-acetylserine mark.

It belongs to the complex I LYR family. As to quaternary structure, complex I is composed of at least 49 different subunits. Expressed in roots, stems, flowers, rosette leaves, cauline leaves and siliques, with the highest expression in the stems.

Its subcellular location is the mitochondrion inner membrane. Its function is as follows. Accessory subunit of the mitochondrial membrane respiratory chain NADH dehydrogenase (Complex I), that is believed to be not involved in catalysis. Complex I functions in the transfer of electrons from NADH to the respiratory chain. The immediate electron acceptor for the enzyme is believed to be ubiquinone. Is required for correct plant growth and development. This Arabidopsis thaliana (Mouse-ear cress) protein is NADH dehydrogenase [ubiquinone] 1 beta subcomplex subunit 9 (CIB22).